Here is a 201-residue protein sequence, read N- to C-terminus: MSRYRGPRFKKIRRLGALPGLTSKRPRAGSDLRNQSRPGKKSQYRIRLEEKQKLRFHYGLTERQLLKYVRIARKAKGSTGQVLLQLLEMRLDNILFRLGMASTIPQARQLVNHRHILVNGRTVDIPSYRCKPRDIISARDEQKSRTLIQNYLDSSTNEELPKHLTFHTLQYKGLVNQIIDRKWVGLKINELLVVEYYSRQT.

Residues 14–43 form a disordered region; it reads RLGALPGLTSKRPRAGSDLRNQSRPGKKSQ. The 81-residue stretch at 89–169 folds into the S4 RNA-binding domain; it reads MRLDNILFRL…LPKHLTFHTL (81 aa).

It belongs to the universal ribosomal protein uS4 family. In terms of assembly, part of the 30S ribosomal subunit. Contacts protein S5. The interaction surface between S4 and S5 is involved in control of translational fidelity.

The protein localises to the plastid. It localises to the chloroplast. One of the primary rRNA binding proteins, it binds directly to 16S rRNA where it nucleates assembly of the body of the 30S subunit. Its function is as follows. With S5 and S12 plays an important role in translational accuracy. This chain is Small ribosomal subunit protein uS4c (rps4), found in Gossypium hirsutum (Upland cotton).